Consider the following 559-residue polypeptide: Tryprostatin B 6-hydroxylase (559 aa).

Transmembrane regions (helical) follow at residues 13-35 (PSVMKCGYLATAGLIGICTHLSY), 48-65 (YVRFHLCLTMGVAALLYA), and 82-104 (VSLLMATYLVGLFASLLLYRTLF). Cys502 contributes to the heme binding site.

Belongs to the cytochrome P450 family. Heme serves as cofactor.

The protein localises to the membrane. It carries out the reaction tryprostatin B + reduced [NADPH--hemoprotein reductase] + O2 = 6-hydroxytryprostatin B + oxidized [NADPH--hemoprotein reductase] + H2O + H(+). It functions in the pathway mycotoxin biosynthesis. In terms of biological role, cytochrome P450 monooxygenase; part of the gene cluster that mediates the biosynthesis of fumitremorgins, indole alkaloids that carry not only intriguing chemical structures, but also interesting biological and pharmacological activities. The biosynthesis of fumitremorgin-type alkaloids begins by condensation of the two amino acids L-tryptophan and L-proline to brevianamide F, catalyzed by the non-ribosomal peptide synthetase ftmA. Brevianamide F is then prenylated by the prenyltransferase ftmPT1/ftmB in the presence of dimethylallyl diphosphate, resulting in the formation of tryprostatin B. The three cytochrome P450 monooxygenases, ftmP450-1/ftmC, ftmP450-2/ftmE and ftmP450-3/FtmG, are responsible for the conversion of tryprostatin B to 6-hydroxytryprostatin B, tryprostatin A to fumitremorgin C and fumitremorgin C to 12,13-dihydroxyfumitremorgin C, respectively. The putative methyltransferase ftmMT/ftmD is expected for the conversion of 6-hydroxytryprostatin B to tryprostatin A. FtmPT2/FtmH catalyzes the prenylation of 12,13-dihydroxyfumitre-morgin C in the presence of dimethylallyl diphosphate, resulting in the formation of fumitremorgin B. Fumitremorgin B is further converted to verruculogen by ftmOx1/ftmF via the insertion of an endoperoxide bond between the two prenyl moieties. In some fungal species, verruculogen is further converted to fumitremorgin A, but the enzymes involved in this step have not been identified yet. In Aspergillus fumigatus (Neosartorya fumigata), this protein is Tryprostatin B 6-hydroxylase.